The sequence spans 87 residues: Small ribosomal subunit protein bS20 (87 aa).

A disordered region spans residues methionine 1–glutamine 22.

This sequence belongs to the bacterial ribosomal protein bS20 family.

In terms of biological role, binds directly to 16S ribosomal RNA. The polypeptide is Small ribosomal subunit protein bS20 (Corynebacterium glutamicum (strain R)).